A 443-amino-acid chain; its full sequence is Ribosomal protein uS12 methylthiotransferase RimO (443 aa).

Positions 8–118 constitute an MTTase N-terminal domain; it reads PKVGFVSLGC…VVNAVHEVVP (111 aa). [4Fe-4S] cluster contacts are provided by C17, C53, C82, C151, C155, and C158. The region spanning 137–375 is the Radical SAM core domain; that stretch reads LTPRHYAYLK…MAHQQAISAA (239 aa). Residues 378–443 form the TRAM domain; sequence QLRIGKEIDV…DEYDMWAEPI (66 aa).

This sequence belongs to the methylthiotransferase family. RimO subfamily. Requires [4Fe-4S] cluster as cofactor.

It is found in the cytoplasm. It carries out the reaction L-aspartate(89)-[ribosomal protein uS12]-hydrogen + (sulfur carrier)-SH + AH2 + 2 S-adenosyl-L-methionine = 3-methylsulfanyl-L-aspartate(89)-[ribosomal protein uS12]-hydrogen + (sulfur carrier)-H + 5'-deoxyadenosine + L-methionine + A + S-adenosyl-L-homocysteine + 2 H(+). Functionally, catalyzes the methylthiolation of an aspartic acid residue of ribosomal protein uS12. The protein is Ribosomal protein uS12 methylthiotransferase RimO of Pseudomonas putida (strain ATCC 700007 / DSM 6899 / JCM 31910 / BCRC 17059 / LMG 24140 / F1).